The chain runs to 1088 residues: RNA-directed RNA polymerase (1088 aa).

Residues 501 to 687 enclose the RdRp catalytic domain; that stretch reads LSYGDVTRFL…AKRYIAGGKI (187 aa).

The protein belongs to the reoviridae RNA-directed RNA polymerase family. Interacts with VP3 (Potential). Interacts with VP2; this interaction activates VP1. Interacts with NSP5; this interaction is probably necessary for the formation of functional virus factories. Interacts with NSP2; this interaction is weak. Requires Mg(2+) as cofactor.

The protein resides in the virion. The enzyme catalyses RNA(n) + a ribonucleoside 5'-triphosphate = RNA(n+1) + diphosphate. RNA-directed RNA polymerase that is involved in both transcription and genome replication. Together with VP3 capping enzyme, forms an enzyme complex positioned near the channels situated at each of the five-fold vertices of the core. Following infection, the outermost layer of the virus is lost, leaving a double-layered particle (DLP) made up of the core and VP6 shell. VP1 then catalyzes the transcription of fully conservative plus-strand genomic RNAs that are extruded through the DLP's channels into the cytoplasm where they function as mRNAs for translation of viral proteins. One copy of each of the viral (+)RNAs is also recruited during core assembly, together with newly synthesized polymerase complexes and VP2. The polymerase of these novo-formed particles catalyzes the synthesis of complementary minus-strands leading to dsRNA formation. To do so, the polymerase specifically recognizes and binds 4 bases 5'-UGUG-3' in the conserved 3'-sequence of plus-strand RNA templates. VP2 presumably activates the autoinhibited VP1-RNA complex to coordinate packaging and genome replication. Once dsRNA synthesis is complete, the polymerase switches to the transcriptional mode, thus providing secondary transcription. This is RNA-directed RNA polymerase from Rotavirus A (strain RVA/Cow/United States/NCDV-Lincoln/1969/G6P6[1]) (RV-A).